The chain runs to 1888 residues: Nuclear pore membrane glycoprotein 210-like (1888 aa).

A signal peptide spans 1-35; that stretch reads MTGCPASSRRRGFGLFFFLRLHRLLLLFLVLRGTL. 7 N-linked (GlcNAc...) asparagine glycosylation sites follow: N84, N304, N348, N495, N522, N812, and N931. The BIG2 domain maps to 1082 to 1154; the sequence is FPPFRLLPEK…TIQTVNEDTG (73 aa). A glycan (N-linked (GlcNAc...) asparagine) is linked at N1445. Residues 1813–1833 form a helical membrane-spanning segment; it reads ILLLTLFAVLASTASIFLAYN. The N-linked (GlcNAc...) asparagine glycan is linked to N1859.

This sequence belongs to the NUP210 family.

The protein resides in the nucleus membrane. This Homo sapiens (Human) protein is Nuclear pore membrane glycoprotein 210-like (NUP210L).